The chain runs to 313 residues: Protein YABBY 3 (313 aa).

The C4-type zinc finger occupies cysteine 65–cysteine 92. Disordered stretches follow at residues threonine 107 to aspartate 149 and asparagine 180 to arginine 221. Residues alanine 112–alanine 128 are compositionally biased toward pro residues.

The protein belongs to the YABBY family. Expressed in shoot apex and young inflorescences.

The protein resides in the nucleus. This chain is Protein YABBY 3 (YAB3), found in Oryza sativa subsp. japonica (Rice).